We begin with the raw amino-acid sequence, 380 residues long: Aprataxin (380 aa).

The FHA-like domain occupies 36–85 (PVIIGRTPELGITDKLCSRSQLELTSNCYKRYVLVKRLGANTSQINGIDI). The tract at residues 176–207 (VYAFDSPSPMSSRCEKKAESNKRAPTHKHWSQ) is disordered. A compositionally biased stretch (basic and acidic residues) spans 188-197 (RCEKKAESNK). The 107-residue stretch at 206 to 312 (SQGLKASMED…ISQDFQSSSF (107 aa)) folds into the HIT domain. Interaction with DNA substrate stretches follow at residues 231-235 (DKYPK) and 294-295 (SM). Positions 297–301 (QMHMH) match the Histidine triad motif motif. The active-site Tele-AMP-histidine intermediate is the His299. The C2H2-type; atypical zinc-finger motif lies at 356-378 (LKCHRCKKPQKNIPTLKKHIDSC).

The protein localises to the nucleus. It is found in the nucleoplasm. It localises to the nucleolus. It carries out the reaction a 5'-end adenosine-5'-diphospho-5'-2'-deoxyribonucleoside-DNA + H2O = a 5'-end 5'-phospho-2'-deoxyribonucleoside-DNA + AMP + 2 H(+). It catalyses the reaction a 5'-end adenosine-5'-diphospho-5'-ribonucleoside-2'-deoxyribonucleotide-DNA + H2O = a 5'-end 5'-phospho-ribonucleoside-2'-deoxyribonucleotide-DNA + AMP + 2 H(+). The enzyme catalyses a 3'-end 2'-deoxyribonucleotide-3'-diphospho-5'-guanosine-DNA + H2O = a 3'-end 2'-deoxyribonucleotide 3'-phosphate-DNA + GMP + 2 H(+). Functionally, DNA-binding protein involved in single-strand DNA break repair, double-strand DNA break repair and base excision repair. Resolves abortive DNA ligation intermediates formed either at base excision sites, or when DNA ligases attempt to repair non-ligatable breaks induced by reactive oxygen species. Catalyzes the release of adenylate groups covalently linked to 5'-phosphate termini, resulting in the production of 5'-phosphate termini that can be efficiently rejoined. Also able to hydrolyze adenosine 5'-monophosphoramidate (AMP-NH(2)) and diadenosine tetraphosphate (AppppA), but with lower catalytic activity. Likewise, catalyzes the release of 3'-linked guanosine (DNAppG) and inosine (DNAppI) from DNA, but has higher specific activity with 5'-linked adenosine (AppDNA). The chain is Aprataxin (APTX) from Ciona intestinalis (Transparent sea squirt).